Consider the following 365-residue polypeptide: Outer capsid protein sigma-3 (365 aa).

The CCHC-type zinc-finger motif lies at 51-73 (CMHCLGVVGSLQRKLKHLPHHRC).

Belongs to the orthoreovirus sigma-3 protein family. As to quaternary structure, heterohexamer of three sigma-3 and three Mu-1 proteins. The RNA-binding form is probably a homodimer. In terms of processing, cleaved during virus the endosomal proteolytic disassembly of the outer capsid.

It is found in the virion. Functionally, stimulates translation by blocking the activation of the dsRNA-dependent protein kinase EIF2AK2/PKR, thereby inhibiting the host interferon response. Sigma3 prevents the activation of EIF2AK2 by competing with the kinase for dsRNA-binding. Its function is as follows. The viral outer shell polypeptides, of which sigma-3 is one, impose structural constraints that prevent elongation of nascent transcripts by the RNA-dependent RNA polymerase lambda-3. The sequence is that of Outer capsid protein sigma-3 (S4) from Mammalia (T1L).